A 108-amino-acid chain; its full sequence is Universal stress protein Slr1101 (108 aa).

This sequence belongs to the universal stress protein A family.

The protein is Universal stress protein Slr1101 of Synechocystis sp. (strain ATCC 27184 / PCC 6803 / Kazusa).